A 49-amino-acid polypeptide reads, in one-letter code: MRVHITLECTECHERNYLSSKNRRNNPDRVEFKKYCPRDRKVTLHRETK.

Belongs to the bacterial ribosomal protein bL33 family.

This Levilactobacillus brevis (strain ATCC 367 / BCRC 12310 / CIP 105137 / JCM 1170 / LMG 11437 / NCIMB 947 / NCTC 947) (Lactobacillus brevis) protein is Large ribosomal subunit protein bL33B.